Consider the following 260-residue polypeptide: Ribonuclease 3 (260 aa).

The tract at residues 1–24 is disordered; it reads MAQSSKYQRKPRSGERKRSQRRLE. The segment covering 12-24 has biased composition (basic and acidic residues); sequence RSGERKRSQRRLE. The RNase III domain occupies 33 to 162; sequence FDDLLVRTGL…FIGALYMDQG (130 aa). Mg(2+) is bound at residue Glu75. Asp79 is a catalytic residue. Residues Asp148 and Glu151 each contribute to the Mg(2+) site. Residue Glu151 is part of the active site. The DRBM domain occupies 188–257; that stretch reads DFKSQLQEFV…AKQALLALNQ (70 aa).

It belongs to the ribonuclease III family. As to quaternary structure, homodimer. The cofactor is Mg(2+).

The protein localises to the cytoplasm. The enzyme catalyses Endonucleolytic cleavage to 5'-phosphomonoester.. Its function is as follows. Digests double-stranded RNA. Involved in the processing of primary rRNA transcript to yield the immediate precursors to the large and small rRNAs (23S and 16S). Processes some mRNAs, and tRNAs when they are encoded in the rRNA operon. Processes pre-crRNA and tracrRNA of type II CRISPR loci if present in the organism. This Shouchella clausii (strain KSM-K16) (Alkalihalobacillus clausii) protein is Ribonuclease 3.